Here is a 180-residue protein sequence, read N- to C-terminus: MAEDDLCSLFFKLKVEDVTSSDELARHMKNASNERKPLIEPGENQSMDIDEEGGSVGHGLLYLYVDCPTMMLCFYGGSLPYNWMQGALLTNLPPYQHDVTLDEVNRGLRQASGFFGYADPMRSAYFAAFSFPGRVIKLNEQMELTSTKGKCLTFDLYASTQLRFEPGELVRHGECKFAIG.

In terms of biological role, hydrolyzes cytokinin glucosides thus liberating free cytokinins. This is Cytokinin-beta-glucosidase 4 (ROLC4) from Panax ginseng (Korean ginseng).